The primary structure comprises 314 residues: Protein phosphatase PTC7 homolog fig (314 aa).

Residues 43-309 enclose the PPM-type phosphatase domain; it reads PYLVTVVQGR…DDITLILSSV (267 aa). Asp-87, Gly-88, and Asp-232 together coordinate Mn(2+).

It belongs to the PP2C family. Mg(2+) serves as cofactor. The cofactor is Mn(2+).

The enzyme catalyses O-phospho-L-seryl-[protein] + H2O = L-seryl-[protein] + phosphate. It carries out the reaction O-phospho-L-threonyl-[protein] + H2O = L-threonyl-[protein] + phosphate. The sequence is that of Protein phosphatase PTC7 homolog fig from Drosophila melanogaster (Fruit fly).